Reading from the N-terminus, the 388-residue chain is Mannitol-1-phosphate 5-dehydrogenase (388 aa).

4 to 15 serves as a coordination point for NAD(+); sequence AVHFGAGNIGRG.

This sequence belongs to the mannitol dehydrogenase family.

It carries out the reaction D-mannitol 1-phosphate + NAD(+) = beta-D-fructose 6-phosphate + NADH + H(+). The sequence is that of Mannitol-1-phosphate 5-dehydrogenase from Lactococcus lactis subsp. cremoris (strain SK11).